Consider the following 117-residue polypeptide: Minor capsid protein p17 (117 aa).

N-linked (GlcNAc...) asparagine; by host glycosylation occurs at N12. The chain crosses the membrane as a helical span at residues 39–59 (AIILGILILLVIILIIVAIVY). N-linked (GlcNAc...) asparagine; by host glycans are attached at residues N61 and N97.

It belongs to the asfivirus minor capsid protein p17 family. As to quaternary structure, interacts with the minor capsid protein M1249L and with the hexon capsid protein p72 capsomers; these interactions form a rigid zipper structure that stabilizes the capsomers. Interacts with host STING1.

The protein resides in the virion membrane. It is found in the host endoplasmic reticulum membrane. In terms of biological role, together with the penton and the other minor capsid proteins (M1249L, p49), forms a complicated network immediately below the outer capsid shell, stabilizing the whole capsid. Three copies of p17 encircle each p72 capsomer in the inner capsid shell, anchoring p72 capsomers on the inner membrane. Required for the assembly of the capsid and icosahedral morphogenesis. Additionally, inhibits the host cGAS-STING pathway through its interaction with STING1 and subsequent interference of the recruitment of downstream components TBK1 and IKBKE. This chain is Minor capsid protein p17, found in Ornithodoros (relapsing fever ticks).